A 139-amino-acid polypeptide reads, in one-letter code: ATP synthase epsilon chain (139 aa).

This sequence belongs to the ATPase epsilon chain family. In terms of assembly, F-type ATPases have 2 components, CF(1) - the catalytic core - and CF(0) - the membrane proton channel. CF(1) has five subunits: alpha(3), beta(3), gamma(1), delta(1), epsilon(1). CF(0) has three main subunits: a, b and c.

Its subcellular location is the cell inner membrane. In terms of biological role, produces ATP from ADP in the presence of a proton gradient across the membrane. This Escherichia coli O157:H7 protein is ATP synthase epsilon chain (atpC).